A 909-amino-acid polypeptide reads, in one-letter code: Valine--tRNA ligase (909 aa).

Residues P52 to H62 carry the 'HIGH' region motif. The 'KMSKS' region motif lies at K542–S546. K545 is a binding site for ATP. Residues I843–K902 are a coiled coil.

The protein belongs to the class-I aminoacyl-tRNA synthetase family. ValS type 1 subfamily. As to quaternary structure, monomer.

It is found in the cytoplasm. The enzyme catalyses tRNA(Val) + L-valine + ATP = L-valyl-tRNA(Val) + AMP + diphosphate. Its function is as follows. Catalyzes the attachment of valine to tRNA(Val). As ValRS can inadvertently accommodate and process structurally similar amino acids such as threonine, to avoid such errors, it has a 'posttransfer' editing activity that hydrolyzes mischarged Thr-tRNA(Val) in a tRNA-dependent manner. This Treponema denticola (strain ATCC 35405 / DSM 14222 / CIP 103919 / JCM 8153 / KCTC 15104) protein is Valine--tRNA ligase.